Here is a 67-residue protein sequence, read N- to C-terminus: DNA-directed RNA polymerase subunit omega (67 aa).

It belongs to the RNA polymerase subunit omega family. The RNAP catalytic core consists of 2 alpha, 1 beta, 1 beta' and 1 omega subunit. When a sigma factor is associated with the core the holoenzyme is formed, which can initiate transcription.

It carries out the reaction RNA(n) + a ribonucleoside 5'-triphosphate = RNA(n+1) + diphosphate. Functionally, promotes RNA polymerase assembly. Latches the N- and C-terminal regions of the beta' subunit thereby facilitating its interaction with the beta and alpha subunits. In Treponema pallidum (strain Nichols), this protein is DNA-directed RNA polymerase subunit omega (rpoZ).